The primary structure comprises 137 residues: Small ribosomal subunit protein uS12 (137 aa).

Disordered regions lie at residues 1–21 (MPTINQLVRKPRKSKIEKSDS) and 33–57 (KVQTKMAAPQKRGVATRVGTMTPKK).

It belongs to the universal ribosomal protein uS12 family. Part of the 30S ribosomal subunit. Contacts proteins S8 and S17. May interact with IF1 in the 30S initiation complex.

Its function is as follows. With S4 and S5 plays an important role in translational accuracy. Functionally, interacts with and stabilizes bases of the 16S rRNA that are involved in tRNA selection in the A site and with the mRNA backbone. Located at the interface of the 30S and 50S subunits, it traverses the body of the 30S subunit contacting proteins on the other side and probably holding the rRNA structure together. The combined cluster of proteins S8, S12 and S17 appears to hold together the shoulder and platform of the 30S subunit. The polypeptide is Small ribosomal subunit protein uS12 (Streptococcus pyogenes serotype M1).